Consider the following 348-residue polypeptide: Eukaryotic translation initiation factor 3 subunit H (348 aa).

The disordered stretch occupies residues 1–25; it reads MASRKEGSGAAGGGFGASKGKGKAA. A compositionally biased stretch (gly residues) spans 9–19; that stretch reads GAAGGGFGASK. The region spanning 35-169 is the MPN domain; it reads VQIDGLVVLK…LKAYRLTPKL (135 aa). Residues 266-285 are compositionally biased toward low complexity; it reads QQQQKHQYQQRRQQENLQRQ. A disordered region spans residues 266 to 304; the sequence is QQQQKHQYQQRRQQENLQRQSRGEAPLPEEDINKLFKPP.

Belongs to the eIF-3 subunit H family. In terms of assembly, component of the eukaryotic translation initiation factor 3 (eIF-3) complex, which is composed of 13 subunits: EIF3A, EIF3B, EIF3C, EIF3D, EIF3E, EIF3F, EIF3G, EIF3H, EIF3I, EIF3J, EIF3K, EIF3L and EIF3M.

The protein localises to the cytoplasm. Functionally, component of the eukaryotic translation initiation factor 3 (eIF-3) complex, which is involved in protein synthesis of a specialized repertoire of mRNAs and, together with other initiation factors, stimulates binding of mRNA and methionyl-tRNAi to the 40S ribosome. The eIF-3 complex specifically targets and initiates translation of a subset of mRNAs involved in cell proliferation. The chain is Eukaryotic translation initiation factor 3 subunit H from Gallus gallus (Chicken).